The chain runs to 337 residues: DNA-directed RNA polymerase subunit alpha (337 aa).

An alpha N-terminal domain (alpha-NTD) region spans residues 1 to 223 (MLISQRPALT…ELFGLAQELN (223 aa)). The alpha C-terminal domain (alpha-CTD) stretch occupies residues 238–337 (SEHIAAYSMP…IDTEGEDIAE (100 aa)).

It belongs to the RNA polymerase alpha chain family. As to quaternary structure, homodimer. The RNAP catalytic core consists of 2 alpha, 1 beta, 1 beta' and 1 omega subunit. When a sigma factor is associated with the core the holoenzyme is formed, which can initiate transcription.

It carries out the reaction RNA(n) + a ribonucleoside 5'-triphosphate = RNA(n+1) + diphosphate. In terms of biological role, DNA-dependent RNA polymerase catalyzes the transcription of DNA into RNA using the four ribonucleoside triphosphates as substrates. The chain is DNA-directed RNA polymerase subunit alpha from Corynebacterium jeikeium (strain K411).